The sequence spans 126 residues: Small ribosomal subunit protein bS6 (126 aa).

This sequence belongs to the bacterial ribosomal protein bS6 family.

Its function is as follows. Binds together with bS18 to 16S ribosomal RNA. This is Small ribosomal subunit protein bS6 from Actinobacillus succinogenes (strain ATCC 55618 / DSM 22257 / CCUG 43843 / 130Z).